We begin with the raw amino-acid sequence, 319 residues long: UDP-N-acetylenolpyruvoylglucosamine reductase (319 aa).

An FAD-binding PCMH-type domain is found at 35–198 (VGGPAEAMFK…TGCVLAGRPD (164 aa)). Arg-178 is a catalytic residue. The active-site Proton donor is Ser-227. Glu-302 is an active-site residue.

It belongs to the MurB family. The cofactor is FAD.

Its subcellular location is the cytoplasm. The catalysed reaction is UDP-N-acetyl-alpha-D-muramate + NADP(+) = UDP-N-acetyl-3-O-(1-carboxyvinyl)-alpha-D-glucosamine + NADPH + H(+). Its pathway is cell wall biogenesis; peptidoglycan biosynthesis. In terms of biological role, cell wall formation. This Rhodospirillum rubrum (strain ATCC 11170 / ATH 1.1.1 / DSM 467 / LMG 4362 / NCIMB 8255 / S1) protein is UDP-N-acetylenolpyruvoylglucosamine reductase.